Consider the following 97-residue polypeptide: Large ribosomal subunit protein bL21 (97 aa).

This sequence belongs to the bacterial ribosomal protein bL21 family. In terms of assembly, part of the 50S ribosomal subunit. Contacts protein L20.

In terms of biological role, this protein binds to 23S rRNA in the presence of protein L20. The sequence is that of Large ribosomal subunit protein bL21 from Persephonella marina (strain DSM 14350 / EX-H1).